The sequence spans 1893 residues: Endoribonuclease Dicer (1893 aa).

Residues 41–217 enclose the Helicase ATP-binding domain; it reads LLEAALDHNT…DLEEKIQKLE (177 aa). An ATP-binding site is contributed by 54–61; it reads LNSGSGKT. The short motif at 165-168 is the DECH box element; sequence DECH. The disordered stretch occupies residues 400 to 424; it reads VSWSDSEDDDDEDEEIEEKEKTETS. The span at 404–416 shows a compositional bias: acidic residues; sequence DSEDDDDEDEEIE. One can recognise a Helicase C-terminal domain in the interval 424–593; the sequence is SFPSPFTNIL…SIDCGNTESE (170 aa). Positions 621–713 constitute a Dicer dsRNA-binding fold domain; the sequence is AIGHINRYCA…MPVGKETVKY (93 aa). The disordered stretch occupies residues 718–737; sequence DLHDEEETSVPGRPGSTKRR. The 151-residue stretch at 886–1036 folds into the PAZ domain; sequence KFVEDIEKSE…LVPELCAIHP (151 aa). RNase III domains follow at residues 1249 to 1380 and 1637 to 1795; these read TSDM…ETSG and FENF…MDSG. Positions 1293, 1371, 1374, 1676, 1781, and 1784 each coordinate Mg(2+). The DRBM domain occupies 1820-1885; sequence VPRSPVRELL…ARRALRSLKA (66 aa).

The protein belongs to the helicase family. Dicer subfamily. Component of the RISC loading complex (RLC), or micro-RNA (miRNA) loading complex (miRLC), which is composed of dicer1, ago2 and tarbp2; dicer1 and tarbp2 are required to process precursor miRNAs (pre-miRNAs) to mature miRNAs and then load them onto ago2. Note that the trimeric RLC/miRLC is also referred to as RISC. Mg(2+) serves as cofactor. It depends on Mn(2+) as a cofactor.

Its subcellular location is the cytoplasm. The catalysed reaction is Endonucleolytic cleavage to 5'-phosphomonoester.. In terms of biological role, double-stranded RNA (dsRNA) endoribonuclease playing a central role in short dsRNA-mediated post-transcriptional gene silencing. Cleaves naturally occurring long dsRNAs and short hairpin pre-microRNAs (miRNA) into fragments of twenty-one to twenty-three nucleotides with 3' overhang of two nucleotides, producing respectively short interfering RNAs (siRNA) and mature microRNAs. SiRNAs and miRNAs serve as guide to direct the RNA-induced silencing complex (RISC) to complementary RNAs to degrade them or prevent their translation. Gene silencing mediated by siRNAs, also called RNA interference, controls the elimination of transcripts from mobile and repetitive DNA elements of the genome but also the degradation of exogenous RNA of viral origin for instance. The miRNA pathway on the other side is a mean to specifically regulate the expression of target genes. This is Endoribonuclease Dicer (dicer1) from Xenopus tropicalis (Western clawed frog).